The primary structure comprises 138 residues: MALLPDKEKLLRNFLRCANWEEKYLYIIELGQRLPELRDEDKSPQNSIQGCQSQVWIVMRQNAQGIIELQGDSDAAIVKGLIAVVIILYDQMTPQDIVNFDVRPWFEKMALTQHLTPSRSQGLEAMIRAIRAKAAALS.

Cys-51 functions as the Cysteine persulfide intermediate in the catalytic mechanism.

Belongs to the SufE family. Homodimer. Interacts with SufS.

Its subcellular location is the cytoplasm. It functions in the pathway cofactor biosynthesis; iron-sulfur cluster biosynthesis. Functionally, participates in cysteine desulfuration mediated by SufS. Cysteine desulfuration mobilizes sulfur from L-cysteine to yield L-alanine and constitutes an essential step in sulfur metabolism for biosynthesis of a variety of sulfur-containing biomolecules. Functions as a sulfur acceptor for SufS, by mediating the direct transfer of the sulfur atom from the S-sulfanylcysteine of SufS, an intermediate product of cysteine desulfuration process. This chain is Cysteine desulfuration protein SufE, found in Escherichia coli O6:K15:H31 (strain 536 / UPEC).